The primary structure comprises 293 residues: Transcription initiation factor IIB 2 (293 aa).

A TFIIB-type zinc finger spans residues M1–E31. Zn(2+) contacts are provided by C3, C6, C23, and C26. Tandem repeats lie at residues S107–I193 and E204–D285.

This sequence belongs to the TFIIB family.

Functionally, stabilizes TBP binding to an archaeal box-A promoter. Also responsible for recruiting RNA polymerase II to the pre-initiation complex (DNA-TBP-TFIIB). This Saccharolobus solfataricus (strain ATCC 35092 / DSM 1617 / JCM 11322 / P2) (Sulfolobus solfataricus) protein is Transcription initiation factor IIB 2.